Reading from the N-terminus, the 115-residue chain is Phosphoribosyl-ATP pyrophosphatase (115 aa).

This sequence belongs to the PRA-PH family.

Its subcellular location is the cytoplasm. It carries out the reaction 1-(5-phospho-beta-D-ribosyl)-ATP + H2O = 1-(5-phospho-beta-D-ribosyl)-5'-AMP + diphosphate + H(+). The protein operates within amino-acid biosynthesis; L-histidine biosynthesis; L-histidine from 5-phospho-alpha-D-ribose 1-diphosphate: step 2/9. This is Phosphoribosyl-ATP pyrophosphatase from Bordetella bronchiseptica (strain ATCC BAA-588 / NCTC 13252 / RB50) (Alcaligenes bronchisepticus).